Consider the following 118-residue polypeptide: Beta-elicitin cryptogein (118 aa).

A signal peptide spans 1 to 20 (MNFTALLAAVAAALVGSANA). 3 disulfides stabilise this stretch: Cys23-Cys91, Cys47-Cys76, and Cys71-Cys115.

This sequence belongs to the elicitin family.

It localises to the secreted. In terms of biological role, induces local and distal defense responses (incompatible hypersensitive reaction) in plants from the solanaceae and cruciferae families. Elicits leaf necrosis and causes the accumulation of pathogenesis-related proteins. Might interact with the lipidic molecules of the plasma membrane. The protein is Beta-elicitin cryptogein of Phytophthora cryptogea.